A 345-amino-acid polypeptide reads, in one-letter code: RNA pseudouridine synthase 1 (345 aa).

Asp134 is an active-site residue.

It belongs to the pseudouridine synthase RluA family.

The catalysed reaction is a uridine in RNA = a pseudouridine in RNA. This chain is RNA pseudouridine synthase 1, found in Oryza sativa subsp. japonica (Rice).